The sequence spans 134 residues: Small ribosomal subunit protein uS9 (134 aa).

Positions 114–134 (QKEAKNFGGPGARSKYQKSYR) are disordered.

It belongs to the universal ribosomal protein uS9 family.

This chain is Small ribosomal subunit protein uS9, found in Methanosarcina mazei (strain ATCC BAA-159 / DSM 3647 / Goe1 / Go1 / JCM 11833 / OCM 88) (Methanosarcina frisia).